A 176-amino-acid polypeptide reads, in one-letter code: Lipoprotein signal peptidase (176 aa).

Transmembrane regions (helical) follow at residues Leu-10–Leu-30, Val-48–Phe-68, Tyr-78–Met-98, and Met-102–Asp-122. Active-site residues include Asp-131 and Asp-149. The chain crosses the membrane as a helical span at residues His-141–Ile-161.

Belongs to the peptidase A8 family.

The protein resides in the cell inner membrane. It carries out the reaction Release of signal peptides from bacterial membrane prolipoproteins. Hydrolyzes -Xaa-Yaa-Zaa-|-(S,diacylglyceryl)Cys-, in which Xaa is hydrophobic (preferably Leu), and Yaa (Ala or Ser) and Zaa (Gly or Ala) have small, neutral side chains.. It participates in protein modification; lipoprotein biosynthesis (signal peptide cleavage). This protein specifically catalyzes the removal of signal peptides from prolipoproteins. This is Lipoprotein signal peptidase from Acinetobacter baumannii (strain ATCC 17978 / DSM 105126 / CIP 53.77 / LMG 1025 / NCDC KC755 / 5377).